Reading from the N-terminus, the 82-residue chain is KSIFERDRRDWLVIPDAVAAYIYEAVNKMSPRAGQFLVDISQTTVVSGTRNFLIRETARLTILAEQLMEKIKNLWYTKVQGY.

This sequence belongs to the apovitellenin family. In terms of assembly, monomer. As to expression, found in egg yolk and in plasma.

In terms of biological role, protein component of the very low density lipoprotein (VLDL) of egg-laying females. Potent lipoprotein lipase inhibitor, preventing the loss of triglycerides from VLDL on their way from the liver to the growing oocytes. The polypeptide is Apovitellenin-1 (Meleagris gallopavo (Wild turkey)).